Consider the following 367-residue polypeptide: Alanine racemase (367 aa).

The Proton acceptor; specific for D-alanine role is filled by Lys-40. Position 40 is an N6-(pyridoxal phosphate)lysine (Lys-40). Residue Arg-136 coordinates substrate. Tyr-263 acts as the Proton acceptor; specific for L-alanine in catalysis. A substrate-binding site is contributed by Met-310.

It belongs to the alanine racemase family. It depends on pyridoxal 5'-phosphate as a cofactor.

It catalyses the reaction L-alanine = D-alanine. It participates in amino-acid biosynthesis; D-alanine biosynthesis; D-alanine from L-alanine: step 1/1. Catalyzes the interconversion of L-alanine and D-alanine. May also act on other amino acids. This chain is Alanine racemase (alr), found in Streptococcus suis (strain 98HAH33).